Reading from the N-terminus, the 33-residue chain is MSDINATRLPIIWAPVVPCISDDNDSTLTRGQR.

Residues 1 to 10 constitute a propeptide that is removed on maturation; sequence MSDINATRLP. The segment at residues 11 to 18 is a cross-link (cyclopeptide (Ile-Pro)); sequence IIWAPVVP. Positions 19-33 are excised as a propeptide; it reads CISDDNDSTLTRGQR.

This sequence belongs to the MSDIN fungal toxin family. Post-translationally, processed by the macrocyclase-peptidase enzyme POPB to yield a toxic cyclic octapeptide. POPB first removes 10 residues from the N-terminus. Conformational trapping of the remaining peptide forces the enzyme to release this intermediate rather than proceed to macrocyclization. The enzyme rebinds the remaining peptide in a different conformation and catalyzes macrocyclization of the N-terminal 8 residues.

Functionally, probable toxin that belongs to the MSDIN-like toxin family responsible for a large number of food poisoning cases and deaths. The chain is MSDIN-like toxin proprotein 1 from Amanita fuliginea (East Asian brown death cap).